Reading from the N-terminus, the 294-residue chain is Nucleotide-binding protein DICTH_1001 (294 aa).

10-17 lines the ATP pocket; sequence GLSGAGKS. 61–64 is a GTP binding site; sequence DIRT.

This sequence belongs to the RapZ-like family.

In terms of biological role, displays ATPase and GTPase activities. The chain is Nucleotide-binding protein DICTH_1001 from Dictyoglomus thermophilum (strain ATCC 35947 / DSM 3960 / H-6-12).